The primary structure comprises 2193 residues: Non-reducing polyketide synthase esdpA (2193 aa).

Residues 90 to 252 enclose the Starter acyltransferase (SAT) domain; it reads NVLLAPLTVL…AKVQVNGRYH (163 aa). In terms of domain architecture, Ketosynthase family 3 (KS3) spans 381–797; the sequence is DECVAIVGAA…GNNTVIIVCE (417 aa). Residues Cys546, His682, and His720 each act as for beta-ketoacyl synthase activity in the active site. Residues 906–1158 enclose the Malonyl-CoA:ACP transacylase (MAT) domain; that stretch reads VFSGQSGMTV…YFVDAVRRIK (253 aa). Ser992 serves as the catalytic For acyl/malonyl transferase activity. Residues 1265–1392 are N-terminal hotdog fold; the sequence is PPMLSLENFS…GRVVLEDRRR (128 aa). The PKS/mFAS DH domain maps to 1265–1569; that stretch reads PPMLSLENFS…FVKISSHILQ (305 aa). The C-terminal hotdog fold stretch occupies residues 1419-1569; that stretch reads VFSASGSIAY…FVKISSHILQ (151 aa). Asp1479 (proton donor; for dehydratase activity) is an active-site residue. One can recognise a Carrier domain in the interval 1723 to 1799; sequence RILSDSMIKL…ELHDLMQSHP (77 aa). O-(pantetheine 4'-phosphoryl)serine is present on Ser1759. Positions 1944-2177 are methyltransferase (CMeT) domain; sequence YHGSEHKLLR…GFTHVDWSND (234 aa).

Pantetheine 4'-phosphate is required as a cofactor.

It functions in the pathway secondary metabolite biosynthesis; terpenoid biosynthesis. In terms of biological role, non-reducing polyketide synthase; part of the cluster that mediates the biosynthesis of shearones, diterpenoid pyrones (DPs) which are structurally diverse meroterpenoids consisting of a diterpene linked by a pyrone, and which may exhibit a range of bioactivities. Whitin the pathway, esdpA takes part to the biosynthesis of the molecular scaffold via the production of the alpha-pyrone from one molecule of acetyl-CoA, two molecules of malonyl-CoA and one molecule of S-adenosyl-L-methionine (SAM). The molecular scaffold is commonly biosynthesized by a series of enzymes including the non-reducing polyketide synthase (NR-PKS) esdpA that generates an alpha-pyrone; the prenyltransferase esdpC that attaches a geranylgeranyl pyrophosphate (GGPP) produced by the GGPP synthase (GGPPS) esdpD onto the pyrone unit; the FAD-dependent monooxygenase esdpE that converts an olefin on the diterpene unit into an epoxide; and the terpene cyclase esdpB that catalyzes the cyclization reactions to give the molecular backbone shearone A. In the modification steps, esdpF oxidizes the hydroxy group to a ketone at C-3 and esdpG then attaches hydroxy groups at both C-11 and C-12. After that, esdpI hydroxylates at C-20 and esdpH hydroxylates at C-6'. The ether bridge is generated by nucleophilic attack of the hydroxy group at C-20 to the carbonyl carbon at C-3. EsdpH can also functions prior to esdpI. The different combinations of these modification enzymes lead to the production of diverse shearone derivatives, shearone I being the end product of the pathway. The alpha-ketoglutarate-dependent dioxygenase esdpJ seems not to be involved in this pathway. This chain is Non-reducing polyketide synthase esdpA, found in Penicillium shearii (Eupenicillium shearii).